A 114-amino-acid chain; its full sequence is T cell receptor beta variable 5-6 (114 aa).

The first 21 residues, 1-21 (MGPGLLCWALLCLLGAGLVDA), serve as a signal peptide directing secretion. Residues 22 to 114 (GVTQSPTHLI…SALYLCASSL (93 aa)) form the Ig-like domain. C42 and C110 are oxidised to a cystine. N-linked (GlcNAc...) asparagine glycosylation occurs at N90.

Alpha-beta TR is a heterodimer composed of an alpha and beta chain; disulfide-linked. The alpha-beta TR is associated with the transmembrane signaling CD3 coreceptor proteins to form the TR-CD3 (TcR or TCR). The assembly of alpha-beta TR heterodimers with CD3 occurs in the endoplasmic reticulum where a single alpha-beta TR heterodimer associates with one CD3D-CD3E heterodimer, one CD3G-CD3E heterodimer and one CD247 homodimer forming a stable octameric structure. CD3D-CD3E and CD3G-CD3E heterodimers preferentially associate with TR alpha and TR beta chains, respectively. The association of the CD247 homodimer is the last step of TcR assembly in the endoplasmic reticulum and is required for transport to the cell surface.

The protein resides in the cell membrane. V region of the variable domain of T cell receptor (TR) beta chain that participates in the antigen recognition. Alpha-beta T cell receptors are antigen specific receptors which are essential to the immune response and are present on the cell surface of T lymphocytes. Recognize peptide-major histocompatibility (MH) (pMH) complexes that are displayed by antigen presenting cells (APC), a prerequisite for efficient T cell adaptive immunity against pathogens. Binding of alpha-beta TR to pMH complex initiates TR-CD3 clustering on the cell surface and intracellular activation of LCK that phosphorylates the ITAM motifs of CD3G, CD3D, CD3E and CD247 enabling the recruitment of ZAP70. In turn ZAP70 phosphorylates LAT, which recruits numerous signaling molecules to form the LAT signalosome. The LAT signalosome propagates signal branching to three major signaling pathways, the calcium, the mitogen-activated protein kinase (MAPK) kinase and the nuclear factor NF-kappa-B (NF-kB) pathways, leading to the mobilization of transcription factors that are critical for gene expression and essential for T cell growth and differentiation. The T cell repertoire is generated in the thymus, by V-(D)-J rearrangement. This repertoire is then shaped by intrathymic selection events to generate a peripheral T cell pool of self-MH restricted, non-autoaggressive T cells. Post-thymic interaction of alpha-beta TR with the pMH complexes shapes TR structural and functional avidity. The protein is T cell receptor beta variable 5-6 of Homo sapiens (Human).